The sequence spans 213 residues: Large ribosomal subunit protein uL18c (213 aa).

Belongs to the universal ribosomal protein uL18 family.

Its subcellular location is the plastid. It is found in the apicoplast. In Plasmodium falciparum (isolate 3D7), this protein is Large ribosomal subunit protein uL18c (RPL18).